A 211-amino-acid chain; its full sequence is FMN-dependent NADH:quinone oxidoreductase 2 (211 aa).

17 to 19 (SYS) serves as a coordination point for FMN.

It belongs to the azoreductase type 1 family. Homodimer. FMN is required as a cofactor.

It catalyses the reaction 2 a quinone + NADH + H(+) = 2 a 1,4-benzosemiquinone + NAD(+). The catalysed reaction is N,N-dimethyl-1,4-phenylenediamine + anthranilate + 2 NAD(+) = 2-(4-dimethylaminophenyl)diazenylbenzoate + 2 NADH + 2 H(+). In terms of biological role, quinone reductase that provides resistance to thiol-specific stress caused by electrophilic quinones. Functionally, also exhibits azoreductase activity. Catalyzes the reductive cleavage of the azo bond in aromatic azo compounds to the corresponding amines. The polypeptide is FMN-dependent NADH:quinone oxidoreductase 2 (Bacillus licheniformis (strain ATCC 14580 / DSM 13 / JCM 2505 / CCUG 7422 / NBRC 12200 / NCIMB 9375 / NCTC 10341 / NRRL NRS-1264 / Gibson 46)).